A 646-amino-acid chain; its full sequence is Zinc finger protein 493 (646 aa).

A C2H2-type 1; degenerate zinc finger spans residues 26 to 48 (FQCDKYVKVFHKLLNSNRHNTKH). 2 consecutive C2H2-type zinc fingers follow at residues 54–76 (FKCK…KRIH) and 82–104 (YRCE…RRVH). The segment at 109 to 131 (SYKYECGKSFNQDSNLTTHKRIH) adopts a C2H2-type 4; degenerate zinc-finger fold. The C2H2-type 5 zinc finger occupies 137–159 (YKCEECGTSFYQFSYLTRHKLIH). Residues 165–187 (YKCEQYGKTFNQSSTLTGHKIIH) form a C2H2-type 6; degenerate zinc finger. A C2H2-type 7; degenerate zinc finger spans residues 193-215 (YKCEECGKAFSIFSTPTKHKIIH). The C2H2-type 8; degenerate zinc-finger motif lies at 221-243 (HRCEEYCKAYKESSHLTTHKRIH). 14 consecutive C2H2-type zinc fingers follow at residues 249–271 (YKCE…KIIH), 277–299 (HRCE…KRIH), 305–327 (YKCE…KIIH), 333–355 (YKCE…RIIH), 361–383 (YKCE…KIIH), 389–411 (YKCE…KMIH), 417–439 (YKCE…KRIH), 445–467 (YKCK…KIIH), 473–495 (YKCE…KKIH), 501–523 (YKCE…KQIH), 529–551 (YKCE…KIIH), 557–579 (YKCE…KIIH), 585–607 (CKCE…KLIH), and 613–635 (YKCE…KIIH).

It localises to the nucleus. Functionally, may be involved in transcriptional regulation. The chain is Zinc finger protein 493 (ZNF493) from Homo sapiens (Human).